A 241-amino-acid chain; its full sequence is Probable transcriptional regulatory protein azo0574 (241 aa).

The disordered stretch occupies residues 1–21 (MAGHSKWANIQHRKGRQDAKR).

It belongs to the TACO1 family.

It localises to the cytoplasm. The protein is Probable transcriptional regulatory protein azo0574 of Azoarcus sp. (strain BH72).